Consider the following 184-residue polypeptide: Peptide deformylase (184 aa).

Residues Cys-98 and His-140 each coordinate Fe cation. The active site involves Glu-141. Position 144 (His-144) interacts with Fe cation.

The protein belongs to the polypeptide deformylase family. Fe(2+) is required as a cofactor.

The enzyme catalyses N-terminal N-formyl-L-methionyl-[peptide] + H2O = N-terminal L-methionyl-[peptide] + formate. Its function is as follows. Removes the formyl group from the N-terminal Met of newly synthesized proteins. Requires at least a dipeptide for an efficient rate of reaction. N-terminal L-methionine is a prerequisite for activity but the enzyme has broad specificity at other positions. This Bacteroides thetaiotaomicron (strain ATCC 29148 / DSM 2079 / JCM 5827 / CCUG 10774 / NCTC 10582 / VPI-5482 / E50) protein is Peptide deformylase.